We begin with the raw amino-acid sequence, 206 residues long: Holliday junction branch migration complex subunit RuvA (206 aa).

The segment at 1-63 (MIASLRGTVI…EDAMKLYGFI (63 aa)) is domain I. Residues 64–142 (DNESREMFSV…AFAAGVVDEA (79 aa)) are domain II. Residues 143–153 (GEQISLPNANI) are flexible linker. Residues 154-206 (ASEVVVEQVSQALVGLGFSEKQSDDAVSFVLAADPSLDTSGALRAALAKLSGK) are domain III.

Belongs to the RuvA family. Homotetramer. Forms an RuvA(8)-RuvB(12)-Holliday junction (HJ) complex. HJ DNA is sandwiched between 2 RuvA tetramers; dsDNA enters through RuvA and exits via RuvB. An RuvB hexamer assembles on each DNA strand where it exits the tetramer. Each RuvB hexamer is contacted by two RuvA subunits (via domain III) on 2 adjacent RuvB subunits; this complex drives branch migration. In the full resolvosome a probable DNA-RuvA(4)-RuvB(12)-RuvC(2) complex forms which resolves the HJ.

It localises to the cytoplasm. The RuvA-RuvB-RuvC complex processes Holliday junction (HJ) DNA during genetic recombination and DNA repair, while the RuvA-RuvB complex plays an important role in the rescue of blocked DNA replication forks via replication fork reversal (RFR). RuvA specifically binds to HJ cruciform DNA, conferring on it an open structure. The RuvB hexamer acts as an ATP-dependent pump, pulling dsDNA into and through the RuvAB complex. HJ branch migration allows RuvC to scan DNA until it finds its consensus sequence, where it cleaves and resolves the cruciform DNA. The chain is Holliday junction branch migration complex subunit RuvA from Corynebacterium glutamicum (strain R).